A 262-amino-acid polypeptide reads, in one-letter code: Cyclin-dependent kinase inhibitor 1 (262 aa).

Residues 140–212 form a disordered region; the sequence is SDVAEAGSEH…SAQQATRPKI (73 aa). The segment covering 160–169 has biased composition (basic and acidic residues); the sequence is SGRDRERRET. Residues 198 to 208 show a composition bias toward low complexity; sequence SAATASAQQAT.

This sequence belongs to the CDI family. ICK/KRP subfamily.

The sequence is that of Cyclin-dependent kinase inhibitor 1 (KRP1) from Oryza sativa subsp. indica (Rice).